Reading from the N-terminus, the 505-residue chain is Autophagy-related protein 18 (505 aa).

WD repeat units lie at residues Ala-246–Gln-286 and Thr-291–Thr-330. The L/FRRG motif signature appears at Phe-287–Thr-291. The disordered stretch occupies residues Glu-328–Lys-380. The segment covering Asp-335–Gly-348 has biased composition (acidic residues). Residues Asp-349–Ser-360 are compositionally biased toward low complexity. Residues Glu-368–Arg-379 show a composition bias toward basic and acidic residues.

Belongs to the WD repeat PROPPIN family. Component of the PI(3,5)P2 regulatory complex.

It localises to the preautophagosomal structure membrane. The protein resides in the vacuole membrane. It is found in the endosome membrane. The PI(3,5)P2 regulatory complex regulates both the synthesis and turnover of phosphatidylinositol 3,5-bisphosphate (PtdIns(3,5)P2). Necessary for proper vacuole morphology. Plays an important role in osmotically-induced vacuole fragmentation. Required for cytoplasm to vacuole transport (Cvt) vesicle formation, pexophagy and starvation-induced autophagy. Involved in correct ATG9 trafficking to the pre-autophagosomal structure. Might also be involved in premeiotic DNA replication. The chain is Autophagy-related protein 18 (ATG18) from Candida glabrata (strain ATCC 2001 / BCRC 20586 / JCM 3761 / NBRC 0622 / NRRL Y-65 / CBS 138) (Yeast).